The primary structure comprises 132 residues: Small ribosomal subunit protein eS17B (132 aa).

S43 is modified (phosphoserine).

This sequence belongs to the eukaryotic ribosomal protein eS17 family. In terms of assembly, component of the small ribosomal subunit (SSU). Mature yeast ribosomes consist of a small (40S) and a large (60S) subunit. The 40S small subunit contains 1 molecule of ribosomal RNA (18S rRNA) and at least 33 different proteins. The large 60S subunit contains 3 rRNA molecules (25S, 5.8S and 5S rRNA) and at least 46 different proteins.

The protein localises to the cytoplasm. Functionally, component of the ribosome, a large ribonucleoprotein complex responsible for the synthesis of proteins in the cell. The small ribosomal subunit (SSU) binds messenger RNAs (mRNAs) and translates the encoded message by selecting cognate aminoacyl-transfer RNA (tRNA) molecules. The large subunit (LSU) contains the ribosomal catalytic site termed the peptidyl transferase center (PTC), which catalyzes the formation of peptide bonds, thereby polymerizing the amino acids delivered by tRNAs into a polypeptide chain. The nascent polypeptides leave the ribosome through a tunnel in the LSU and interact with protein factors that function in enzymatic processing, targeting, and the membrane insertion of nascent chains at the exit of the ribosomal tunnel. The chain is Small ribosomal subunit protein eS17B (rps1702) from Schizosaccharomyces pombe (strain 972 / ATCC 24843) (Fission yeast).